The primary structure comprises 304 residues: N-carbamoyl-D-amino acid hydrolase (304 aa).

The CN hydrolase domain maps to 5–276; the sequence is MILAVGQQGP…DEVITAAVDL (272 aa). Active-site residues include E47, K127, and C172.

The catalysed reaction is an N-carbamoyl-D-amino acid + H2O + 2 H(+) = a D-alpha-amino acid + NH4(+) + CO2. Functionally, the enzyme catalyzes the hydrolysis of N-carbamoyl-D-amino acids to the corresponding which are useful intermediates in the preparation of beta-lactam antibiotics. Industrial production of beta-lactam antibiotics is now being developed using this enzyme. The polypeptide is N-carbamoyl-D-amino acid hydrolase (Agrobacterium sp. (strain KNK712)).